The following is a 629-amino-acid chain: tRNA uridine 5-carboxymethylaminomethyl modification enzyme MnmG (629 aa).

13 to 18 (GGGHAG) is an FAD binding site. Position 273–287 (273–287 (GPRYCPSIEDKVNRF)) interacts with NAD(+).

Belongs to the MnmG family. In terms of assembly, homodimer. Heterotetramer of two MnmE and two MnmG subunits. Requires FAD as cofactor.

Its subcellular location is the cytoplasm. Functionally, NAD-binding protein involved in the addition of a carboxymethylaminomethyl (cmnm) group at the wobble position (U34) of certain tRNAs, forming tRNA-cmnm(5)s(2)U34. The protein is tRNA uridine 5-carboxymethylaminomethyl modification enzyme MnmG of Hahella chejuensis (strain KCTC 2396).